The primary structure comprises 358 residues: Nicotinate-nucleotide--dimethylbenzimidazole phosphoribosyltransferase (358 aa).

Glu-314 (proton acceptor) is an active-site residue.

The protein belongs to the CobT family.

The catalysed reaction is 5,6-dimethylbenzimidazole + nicotinate beta-D-ribonucleotide = alpha-ribazole 5'-phosphate + nicotinate + H(+). It participates in nucleoside biosynthesis; alpha-ribazole biosynthesis; alpha-ribazole from 5,6-dimethylbenzimidazole: step 1/2. Functionally, catalyzes the synthesis of alpha-ribazole-5'-phosphate from nicotinate mononucleotide (NAMN) and 5,6-dimethylbenzimidazole (DMB). The chain is Nicotinate-nucleotide--dimethylbenzimidazole phosphoribosyltransferase from Mycobacterium ulcerans (strain Agy99).